Here is an 8892-residue protein sequence, read N- to C-terminus: Nonribosomal peptide synthetase 32 (8892 aa).

In terms of domain architecture, Carrier 1 spans 12–85 (EPSKLVLGRV…QLAESIAQQN (74 aa)). O-(pantetheine 4'-phosphoryl)serine is present on Ser-46. The disordered stretch occupies residues 88 to 112 (AGNGVNGHANGNGMNGNGLHNEATI). Residues 93-108 (NGHANGNGMNGNGLHN) show a composition bias toward low complexity. Residues 567–956 (PTSANVPRRV…EGVDLSVRDF (390 aa)) form a condensation 1 region. The interval 989 to 1386 (KMAEQPEALA…GRIDSQIKIR (398 aa)) is adenylation 1. The Carrier 2 domain maps to 1523–1599 (ISATAVEREL…ELAAEVQATQ (77 aa)). Ser-1560 carries the O-(pantetheine 4'-phosphoryl)serine modification. The interval 1609–2039 (GAIALSPIQQ…YGQTVKSLVN (431 aa)) is epimerization 1. Residues 2083 to 2518 (EDILPCSPIQ…LLLPAEEAKL (436 aa)) are condensation 2. Residues 2543–2934 (SQPEALAVSA…GRRDTQVKIR (392 aa)) are adenylation 2. One can recognise a Carrier 3 domain in the interval 3061–3137 (SSATPIEREL…ELAANSQTGR (77 aa)). Ser-3098 is subject to O-(pantetheine 4'-phosphoryl)serine. Residues 3153–3590 (LSPIQQMFFD…GDTVKTLVEE (438 aa)) form an epimerization 2 region. Residues 3634–4061 (EDILPCSAIQ…NVDRPLRELT (428 aa)) are condensation 3. An adenylation 3 region spans residues 4098–4488 (TLPEALAISS…GRIDSQIKIR (391 aa)). Positions 4627–4703 (APTTDLERKL…DLSRVVEEKC (77 aa)) constitute a Carrier 4 domain. O-(pantetheine 4'-phosphoryl)serine is present on Ser-4664. The interval 4760-5181 (EDVYPCSPMQ…LLTDEDCDQL (422 aa)) is condensation 4. The interval 5205-5605 (TSYPTAPAIS…GRRDTQVKIR (401 aa)) is adenylation 4. Positions 5745 to 5821 (MPTTPMEQKL…DLAEAMEEKG (77 aa)) constitute a Carrier 5 domain. At Ser-5782 the chain carries O-(pantetheine 4'-phosphoryl)serine. Positions 5868-6285 (EDVYPCSPLQ…LLSPGQMAQI (418 aa)) are condensation 5. The tract at residues 6307–6700 (QMTTRPAATA…GRIDTQIKIR (394 aa)) is adenylation 5. A Carrier 6 domain is found at 6834–6911 (ELTTTIERQL…ELATQTQTTE (78 aa)). Position 6872 is an O-(pantetheine 4'-phosphoryl)serine (Ser-6872). Residues 6923 to 7360 (NFQLSPIQQM…SYSCAIESLV (438 aa)) are epimerization 3. The interval 7403-7834 (VQDILPCSPI…LLPAGDANQI (432 aa)) is condensation 6. The tract at residues 7855–8253 (QQMAAHPTAQ…LDRIGTQVKI (399 aa)) is adenylation 6. One can recognise a Carrier 7 domain in the interval 8380–8456 (APVGRNEEIL…AMAARVTADI (77 aa)). Ser-8417 is subject to O-(pantetheine 4'-phosphoryl)serine. Residues 8490-8878 (HFAFDATGPC…EIIEDSGCNV (389 aa)) form a condensation 7 region.

Belongs to the NRP synthetase family.

The protein operates within secondary metabolite biosynthesis. Nonribosomal peptide synthetase; part of the gene cluster that mediates the biosynthesis of the lipopeptides W493 A and B. W493 A and B consist of six amino acid residues D-allo-thr, L-Ala, D-Ala, L-Gln, D-Tyr, and L-Val/L-Ile linked to a 3-hydroxy-4-methyltetradecanoic acid polyketide chain. The biosynthesis starts with formation of the linear polyketide chain by the highly reducing polyketide synthase PKS40. The gene cluster contains a putative acyl-CoA ligase (FPSE_09184) for formation of a CoA thioester polyketide. The thiol bond could be hydrolyzed by the putative thioesterase (FPSE_09186) and then accepted by the first T domain in module 1 of NRPS32. The second T domain is responsible for accepting a threonine, which is adenylated by the A domain and epimerized to the D-allo-threonine formed by the E domain. The five successive modules incorporate Ala, Ala, Gln, Tyr, and Val/Ile into the final product, which is released by cyclization. The chain is Nonribosomal peptide synthetase 32 from Fusarium pseudograminearum (strain CS3096) (Wheat and barley crown-rot fungus).